The sequence spans 294 residues: Transcription factor nsy-7 (294 aa).

Disordered regions lie at residues 43 to 119 (CNLR…TPDL) and 167 to 191 (LRLPNGNGTEKYHPYGGNSKNDSPL). Polar residues-rich tracts occupy residues 52-63 (DQPTTSSNSVKE) and 81-115 (RRQSNPHSSLPAISSSTVKNEPTDSWTPSALSNDP). A DNA-binding region (homeobox; atypical) is located at residues 192 to 232 (QTRMKGWQREYIKEVIKDSHYPTEEELRDIEQKCDLSRKQI). The tract at residues 238 to 274 (KRLTNPNRKPRVNHHDEKRKEQEERDSLADPDDDMIN) is disordered. The span at 250-265 (NHHDEKRKEQEERDSL) shows a compositional bias: basic and acidic residues.

As to expression, expressed widely, including gut, the amphid sheath glial cells, and head and tail neurons including AWC, ASE, and ASH. Expressed in AWC (ON) olfactory neuron but not AWC (OFF).

It localises to the nucleus. Its function is as follows. Transcriptional regulator which binds DNA consensus sequence 5'-CCTTAAC-3'. Plays a role in establishing and maintaining asymmetric cell fates in chemosensory AWC neurons during larval neuronal development. This is achieved by repressing the expression of multiple AWC (OFF) genes, including srsx-3 and hlh-11 in the AWC (ON) neuron. Activates expression of sox-2 in the AWC (ON) neuron. The polypeptide is Transcription factor nsy-7 (Caenorhabditis elegans).